Here is an 88-residue protein sequence, read N- to C-terminus: Acylphosphatase (88 aa).

Positions 3-88 (AARFVVSGVV…VPPTEDFVTG (86 aa)) constitute an Acylphosphatase-like domain. Catalysis depends on residues Arg-18 and Asn-36.

Belongs to the acylphosphatase family.

It catalyses the reaction an acyl phosphate + H2O = a carboxylate + phosphate + H(+). This chain is Acylphosphatase (acyP), found in Xanthomonas euvesicatoria pv. vesicatoria (strain 85-10) (Xanthomonas campestris pv. vesicatoria).